The chain runs to 1407 residues: DNA-directed RNA polymerase subunit beta' (1407 aa).

Positions 70, 72, 85, and 88 each coordinate Zn(2+). 3 residues coordinate Mg(2+): aspartate 460, aspartate 462, and aspartate 464. Zn(2+) contacts are provided by cysteine 814, cysteine 888, cysteine 895, and cysteine 898. Lysine 972 carries the post-translational modification N6-acetyllysine.

The protein belongs to the RNA polymerase beta' chain family. As to quaternary structure, the RNAP catalytic core consists of 2 alpha, 1 beta, 1 beta' and 1 omega subunit. When a sigma factor is associated with the core the holoenzyme is formed, which can initiate transcription. It depends on Mg(2+) as a cofactor. Requires Zn(2+) as cofactor.

The enzyme catalyses RNA(n) + a ribonucleoside 5'-triphosphate = RNA(n+1) + diphosphate. Its function is as follows. DNA-dependent RNA polymerase catalyzes the transcription of DNA into RNA using the four ribonucleoside triphosphates as substrates. This Shigella dysenteriae serotype 1 (strain Sd197) protein is DNA-directed RNA polymerase subunit beta'.